Consider the following 405-residue polypeptide: Deoxyguanosinetriphosphate triphosphohydrolase-like protein (405 aa).

Residues 75–219 (RLTHTIEVAQ…AAIADDIAYN (145 aa)) enclose the HD domain.

Belongs to the dGTPase family. Type 2 subfamily.

This is Deoxyguanosinetriphosphate triphosphohydrolase-like protein from Rhizobium etli (strain ATCC 51251 / DSM 11541 / JCM 21823 / NBRC 15573 / CFN 42).